We begin with the raw amino-acid sequence, 172 residues long: Large ribosomal subunit protein uL10 (172 aa).

The protein belongs to the universal ribosomal protein uL10 family. In terms of assembly, part of the ribosomal stalk of the 50S ribosomal subunit. The N-terminus interacts with L11 and the large rRNA to form the base of the stalk. The C-terminus forms an elongated spine to which L12 dimers bind in a sequential fashion forming a multimeric L10(L12)X complex.

Its function is as follows. Forms part of the ribosomal stalk, playing a central role in the interaction of the ribosome with GTP-bound translation factors. This chain is Large ribosomal subunit protein uL10, found in Chlorobium luteolum (strain DSM 273 / BCRC 81028 / 2530) (Pelodictyon luteolum).